Consider the following 103-residue polypeptide: MSSQSHWLTAEERTQVLLDLKASGWSESGERDAIYKEFNFKNFNQAFGFMTRVALQAENMNHHPEWFNVYSKVQITLISHDCGGLTKRDVKLAQFIDKAAASV.

Belongs to the pterin-4-alpha-carbinolamine dehydratase family. Highest level found in the kidney, liver, heart and ovarian follicles.

The catalysed reaction is (4aS,6R)-4a-hydroxy-L-erythro-5,6,7,8-tetrahydrobiopterin = (6R)-L-erythro-6,7-dihydrobiopterin + H2O. Functionally, involved in tetrahydrobiopterin biosynthesis. Seems to both prevent the formation of 7-pterins and accelerate the formation of quinonoid-BH2. Its function is as follows. Regulates the dimerization of homeodomain protein HNF-1-alpha and enhances its transcriptional activity. This chain is Pterin-4-alpha-carbinolamine dehydratase 2 (PCBD2), found in Gallus gallus (Chicken).